The primary structure comprises 322 residues: Sideroflexin-1 (322 aa).

S2 is modified (N-acetylserine). Residues 2-102 (SGELPPNINI…MSAQVPMNMT (101 aa)) lie on the Mitochondrial matrix side of the membrane. Residues 103–120 (ITGCMMTFYRTTPAVLFW) traverse the membrane as a helical segment. Over 121 to 146 (QWVNQSFNAVVNYTNRSGDAPLTVNE) the chain is Mitochondrial intermembrane. Residues 147–167 (LGTAYVSATTGAVATALGLNA) form a helical membrane-spanning segment. Residues 168 to 174 (LTKRVSP) are Mitochondrial matrix-facing. The helical transmembrane segment at 175 to 195 (LVGRFVPFAAVAAANCINIPL) threads the bilayer. Over 196–228 (MRQRELKVGIPVTDENGNRLGESASAAKQAITQ) the chain is Mitochondrial intermembrane. The helical transmembrane segment at 229 to 249 (VVVSRILMAAPGMAIPPFIMN) threads the bilayer. Over 250–266 (TLEKKAFLKRFPWMSAP) the chain is Mitochondrial matrix. A helical membrane pass occupies residues 267-287 (VQVGIVGFCLVFATPLCCALF). The Mitochondrial intermembrane portion of the chain corresponds to 288–322 (PQKSSMSVTSLEAELQARIRETYPELRRVYFNKGL).

This sequence belongs to the sideroflexin family.

It localises to the mitochondrion inner membrane. It catalyses the reaction L-serine(in) = L-serine(out). The enzyme catalyses L-alanine(in) = L-alanine(out). It carries out the reaction L-cysteine(in) = L-cysteine(out). Its function is as follows. Amino acid transporter importing serine, an essential substrate of the mitochondrial branch of the one-carbon pathway, into mitochondria. Mitochondrial serine is then converted to glycine and formate, which exits to the cytosol where it is used to generate the charged folates that serve as one-carbon donors. May also transport other amino acids including alanine and cysteine. The chain is Sideroflexin-1 (SFXN1) from Ovis aries (Sheep).